A 486-amino-acid chain; its full sequence is 2-isopropylmalate synthase (486 aa).

The Pyruvate carboxyltransferase domain maps to V4–A266. Mn(2+) contacts are provided by D13, H201, H203, and N237. Residues K390–A486 form a regulatory domain region.

It belongs to the alpha-IPM synthase/homocitrate synthase family. LeuA type 1 subfamily. Requires Mn(2+) as cofactor.

The protein localises to the cytoplasm. It catalyses the reaction 3-methyl-2-oxobutanoate + acetyl-CoA + H2O = (2S)-2-isopropylmalate + CoA + H(+). It participates in amino-acid biosynthesis; L-leucine biosynthesis; L-leucine from 3-methyl-2-oxobutanoate: step 1/4. Its function is as follows. Catalyzes the condensation of the acetyl group of acetyl-CoA with 3-methyl-2-oxobutanoate (2-ketoisovalerate) to form 3-carboxy-3-hydroxy-4-methylpentanoate (2-isopropylmalate). The polypeptide is 2-isopropylmalate synthase (Pyrococcus abyssi (strain GE5 / Orsay)).